Here is a 330-residue protein sequence, read N- to C-terminus: Endochitinase Ziz m 1.0101 (330 aa).

Residues 1 to 24 form the signal peptide; the sequence is MVPQAKLVVASLILTSALIQTSEA. One can recognise a GH18 domain in the interval 26 to 330; the sequence is GGIATYWGQY…LRTKFMYQNA (305 aa). Intrachain disulfides connect C47-C90, C77-C80, and C187-C219. Positions 72–86 are binds to IgE in 70% of the 10 patients tested allergic to Indian jujube and latex; that stretch reads NISGHCSDCTFLGEE. The tract at residues 292-301 is binds to IgE in 100% of the 10 patients tested allergic to Indian jujube and latex; sufficient for prediction of the presence of allergic reactions in these patients; sequence VWNRYYDLKT. 2 binds to IgE in 70% of the 10 patients tested allergic to Indian jujube and latex regions span residues 300 to 311 and 309 to 320; these read KTNYSSSIILEY and LEYVNSGTKYLP.

The protein belongs to the glycosyl hydrolase 18 family. Chitinase class II subfamily.

It is found in the secreted. It catalyses the reaction Random endo-hydrolysis of N-acetyl-beta-D-glucosaminide (1-&gt;4)-beta-linkages in chitin and chitodextrins.. Defense against chitin containing fungal pathogens. The sequence is that of Endochitinase Ziz m 1.0101 from Ziziphus mauritiana (Indian jujube).